A 529-amino-acid polypeptide reads, in one-letter code: CTP synthase (529 aa).

The tract at residues 1-266 is amidoligase domain; the sequence is MTKYIIVTGG…TKKIFNKLGL (266 aa). Residue S13 coordinates CTP. S13 contacts UTP. 14–19 is a binding site for ATP; it reads SVGKGT. Y54 lines the L-glutamine pocket. An ATP-binding site is contributed by D71. D71 and E141 together coordinate Mg(2+). Residues 148 to 150, 187 to 192, and K223 contribute to the CTP site; these read DIE and KTKPLQ. Residues 187 to 192 and K223 each bind UTP; that span reads KTKPLQ. Residues 291–529 form the Glutamine amidotransferase type-1 domain; the sequence is KIALVGKYTK…FLNFLSVASA (239 aa). Residue G354 coordinates L-glutamine. C381 functions as the Nucleophile; for glutamine hydrolysis in the catalytic mechanism. Residues 382-385, E405, and R462 each bind L-glutamine; that span reads FGMQ. Residues H506 and E508 contribute to the active site.

The protein belongs to the CTP synthase family. In terms of assembly, homotetramer.

It carries out the reaction UTP + L-glutamine + ATP + H2O = CTP + L-glutamate + ADP + phosphate + 2 H(+). The enzyme catalyses L-glutamine + H2O = L-glutamate + NH4(+). The catalysed reaction is UTP + NH4(+) + ATP = CTP + ADP + phosphate + 2 H(+). The protein operates within pyrimidine metabolism; CTP biosynthesis via de novo pathway; CTP from UDP: step 2/2. Its activity is regulated as follows. Allosterically activated by GTP, when glutamine is the substrate; GTP has no effect on the reaction when ammonia is the substrate. The allosteric effector GTP functions by stabilizing the protein conformation that binds the tetrahedral intermediate(s) formed during glutamine hydrolysis. Inhibited by the product CTP, via allosteric rather than competitive inhibition. Functionally, catalyzes the ATP-dependent amination of UTP to CTP with either L-glutamine or ammonia as the source of nitrogen. Regulates intracellular CTP levels through interactions with the four ribonucleotide triphosphates. The chain is CTP synthase from Sulfolobus acidocaldarius (strain ATCC 33909 / DSM 639 / JCM 8929 / NBRC 15157 / NCIMB 11770).